Here is a 124-residue protein sequence, read N- to C-terminus: Glycine cleavage system H protein (124 aa).

Positions 19-101 (VATVGITNHA…EGEGWLFKME (83 aa)) constitute a Lipoyl-binding domain. K60 is modified (N6-lipoyllysine).

This sequence belongs to the GcvH family. In terms of assembly, the glycine cleavage system is composed of four proteins: P, T, L and H. It depends on (R)-lipoate as a cofactor.

Functionally, the glycine cleavage system catalyzes the degradation of glycine. The H protein shuttles the methylamine group of glycine from the P protein to the T protein. The polypeptide is Glycine cleavage system H protein (Thermotoga maritima (strain ATCC 43589 / DSM 3109 / JCM 10099 / NBRC 100826 / MSB8)).